Reading from the N-terminus, the 1032-residue chain is Vacuolar membrane protease (1032 aa).

The Cytoplasmic portion of the chain corresponds to Met-1–Pro-11. Residues Gly-12–Val-32 traverse the membrane as a helical segment. Residues Gln-33–Ala-415 lie on the Vacuolar side of the membrane. N-linked (GlcNAc...) asparagine glycans are attached at residues Asn-50, Asn-138, and Asn-147. Positions 194 and 206 each coordinate Zn(2+). The Proton acceptor role is filled by Glu-240. Residues Glu-241, Glu-266, and His-339 each contribute to the Zn(2+) site. A helical membrane pass occupies residues Trp-416–Val-436. Topologically, residues Arg-437 to Arg-469 are cytoplasmic. The helical transmembrane segment at Phe-470–Lys-490 threads the bilayer. Over Val-491 to Pro-493 the chain is Vacuolar. A helical membrane pass occupies residues Leu-494–Val-514. Over Ser-515 to Arg-532 the chain is Cytoplasmic. Residues Gly-533–Ala-553 form a helical membrane-spanning segment. Residues Glu-554–Gly-560 lie on the Vacuolar side of the membrane. A helical transmembrane segment spans residues Ala-561–Leu-581. The Cytoplasmic portion of the chain corresponds to Glu-582–Trp-701. The interval Gln-595–Asn-688 is disordered. A compositionally biased stretch (acidic residues) spans Glu-599–Gln-608. A compositionally biased stretch (polar residues) spans Ser-651–Asn-660. A helical membrane pass occupies residues Phe-702–Val-722. At Gln-723–Leu-738 the chain is on the vacuolar side. Residues Ala-739–Ile-759 form a helical membrane-spanning segment. Topologically, residues His-760–Val-766 are cytoplasmic. Residues Pro-767–Phe-787 form a helical membrane-spanning segment. Residues Ser-788–Ala-1032 lie on the Vacuolar side of the membrane. An N-linked (GlcNAc...) asparagine glycan is attached at Asn-940.

It belongs to the peptidase M28 family. Zn(2+) is required as a cofactor.

It is found in the vacuole membrane. In terms of biological role, may be involved in vacuolar sorting and osmoregulation. The polypeptide is Vacuolar membrane protease (Metarhizium robertsii (strain ARSEF 23 / ATCC MYA-3075) (Metarhizium anisopliae (strain ARSEF 23))).